Reading from the N-terminus, the 533-residue chain is MDDNRIRSILVLGGGTAGWMSACYLSKALGPGVEVTVLEAPSISRIRVGEATIPNLHKVFFDFLGIAEDEWMRECNASYKAAVRFVNWRTPGDGQATPRRRPDGRPDHFDHLFGQLPEHENLPLSQYWAHRRLNGLTDEPFDRSCYVQPELLDRKLSPRLMDGTKLASYAWHFDADLVADFLCRFAVQKLNVTHVQDVFTHADLDQRGHITAVNTESGRTLAADLFIDCSGFRSVLMGKVMQEPFLDMSKHLLNDRAVALMLPHDDEKVGIEPYTSSLAMRSGWSWKIPLLGRFGSGYVYSSQFTSQDEAAEELCRMWDVDPAEQTFNNVRFRVGRSRRAWVRNCVAIGVSAMFVEPLESTGLYFSYASLYQLVKHFPDKRFRPILADRFNREVATMYDDTRDFLQAHFSLSPRDDSEFWRACKELPFADGFAEKVEMYRAGLPVELPVTIDDGHYYGNFEAEFRNFWTNSNYYCIFAGLGFLPEHPLPVLEFRPEAVDRAEPVFAAVRRRTEELVATAPTMQAYLRRLHQGT.

Positions 14, 16, 17, 40, 50, and 51 each coordinate FAD. Lys-80 is an active-site residue. Glu-359 lines the L-tryptophan pocket. 2 residues coordinate chloride: Thr-361 and Gly-362. Leu-363 lines the FAD pocket. 4 residues coordinate L-tryptophan: Tyr-456, Tyr-457, Glu-463, and Phe-467.

Belongs to the flavin-dependent halogenase family. Bacterial tryptophan halogenase subfamily.

It catalyses the reaction L-tryptophan + FADH2 + chloride + O2 = 7-chloro-L-tryptophan + FAD + 2 H2O. Functionally, involved in the biosynthesis of kutznerides, actinomycete-derived antifungal and antimicrobial cyclic hexadepsipeptides. Together with KtzR, catalyzes the regiospecific dichlorination of L-tryptophan (L-Trp) to produce 6,7-dichloro-L-tryptophan. KtzQ catalyzes the chlorination of L-Trp at C7 position to yield 7-chlorotryptophan. Can also use 6-chloro-L-tryptophan as substrate and form 6,7-dichloro-L-tryptophan, but has a preference for halogenation at the 7 position of unmodified L-Trp. Cannot use piperazic acid or gamma,delta-dehydropiperazic acid. In Kutzneria sp. (strain 744), this protein is Tryptophan 7-halogenase KtzQ.